The following is a 226-amino-acid chain: PKHD-type hydroxylase mma_3620 (226 aa).

Residues 78–178 (RYMPPLFNRY…RVCSFFWLQS (101 aa)) form the Fe2OG dioxygenase domain. Fe cation is bound by residues H96, D98, and H159. A 2-oxoglutarate-binding site is contributed by R169.

The cofactor is Fe(2+). Requires L-ascorbate as cofactor.

This is PKHD-type hydroxylase mma_3620 from Janthinobacterium sp. (strain Marseille) (Minibacterium massiliensis).